The chain runs to 1369 residues: Rho-associated protein kinase 1 (1369 aa).

The residue at position 2 (serine 2) is an N-acetylserine. Positions 76–338 constitute a Protein kinase domain; the sequence is YEVVKVIGRG…VEEIKRHLFF (263 aa). Residues 82–90 and lysine 105 each bind ATP; that span reads IGRGAFGEV. Aspartate 198 functions as the Proton acceptor in the catalytic mechanism. Positions 341-409 constitute an AGC-kinase C-terminal domain; that stretch reads DQWAWETLRD…YSNRRYLPSA (69 aa). Residues 368 to 727 form an interaction with FHOD1 region; it reads FDDLEEDKGD…KKLKEEREAR (360 aa). Residues 422-692 are a coiled coil; that stretch reads KNVQESLQKT…RLEQEVNEHK (271 aa). The region spanning 479–556 is the REM-1 domain; sequence SAVSQIEKEK…LEEANDLLRT (78 aa). The interval 707 to 946 is SHROOM3 binding; it reads EAKSVAMCEM…TVSRLEEANN (240 aa). The region spanning 949-1015 is the RhoBD domain; sequence TKDIELLRKE…LAEIMNRKDF (67 aa). The segment at 998–1010 is RHOA binding; sequence LKTQAVNKLAEIM. Positions 1011–1102 form a coiled coil; it reads NRKDFKIDRK…KLLDLSDSTS (92 aa). Residues serine 1105 and serine 1108 each carry the phosphoserine modification. The segment at 1115–1369 is auto-inhibitory; the sequence is NLPVGSACIP…VVKNTSGKTS (255 aa). The PH domain occupies 1133–1332; it reads SSRIEGWLSV…WVTHLVKKIP (200 aa). The Phorbol-ester/DAG-type zinc-finger motif lies at 1243-1298; that stretch reads GHEFIPTLYHFPANCEACAKPLWHVFKPPPALECRRCHVKSHRDHLDKKEDLIPPC. Serine 1343 carries the phosphoserine modification.

It belongs to the protein kinase superfamily. AGC Ser/Thr protein kinase family. In terms of assembly, homodimer. Interacts with GEM, MYLC2B, RHOE, LIMK1, LIMK2, TSG101, CHORDC1, DAPK3, PFN1, PTEN and JIP3. Interacts with FHOD1 in a Src-dependent manner. Interacts with ITGB1BP1 (via N-terminus and PTB domain). Interacts with RHOA (activated by GTP), RHOB, RHOC and PPP1R12A. Interacts with SHROOM3. Requires Mg(2+) as cofactor. Autophosphorylated on serine and threonine residues. In terms of processing, cleaved by caspase-3 during apoptosis. This leads to constitutive activation of the kinase and membrane blebbing. As to expression, highly expressed in brain, spleen, lung, liver, skeletal muscle, kidney and testis.

It is found in the cytoplasm. The protein localises to the cytoskeleton. The protein resides in the microtubule organizing center. Its subcellular location is the centrosome. It localises to the centriole. It is found in the golgi apparatus membrane. The protein localises to the cell projection. The protein resides in the bleb. Its subcellular location is the cell membrane. It localises to the lamellipodium. It is found in the ruffle. The enzyme catalyses L-seryl-[protein] + ATP = O-phospho-L-seryl-[protein] + ADP + H(+). It carries out the reaction L-threonyl-[protein] + ATP = O-phospho-L-threonyl-[protein] + ADP + H(+). Its activity is regulated as follows. Activated by RHOA binding. Inhibited by Y-27632. Functionally, protein kinase which is a key regulator of the actin cytoskeleton and cell polarity. Involved in regulation of smooth muscle contraction, actin cytoskeleton organization, stress fiber and focal adhesion formation, neurite retraction, cell adhesion and motility via phosphorylation of DAPK3, GFAP, LIMK1, LIMK2, MYL9/MLC2, TPPP, PFN1 and PPP1R12A. Phosphorylates FHOD1 and acts synergistically with it to promote SRC-dependent non-apoptotic plasma membrane blebbing. Phosphorylates JIP3 and regulates the recruitment of JNK to JIP3 upon UVB-induced stress. Acts as a suppressor of inflammatory cell migration by regulating PTEN phosphorylation and stability. Acts as a negative regulator of VEGF-induced angiogenic endothelial cell activation. Required for centrosome positioning and centrosome-dependent exit from mitosis. Plays a role in terminal erythroid differentiation. Inhibits podocyte motility via regulation of actin cytoskeletal dynamics and phosphorylation of CFL1. Promotes keratinocyte terminal differentiation. Involved in osteoblast compaction through the fibronectin fibrillogenesis cell-mediated matrix assembly process, essential for osteoblast mineralization. May regulate closure of the eyelids and ventral body wall by inducing the assembly of actomyosin bundles. The sequence is that of Rho-associated protein kinase 1 (Rock1) from Rattus norvegicus (Rat).